A 318-amino-acid polypeptide reads, in one-letter code: Pyrimidine-specific ribonucleoside hydrolase RihA (318 aa).

Histidine 240 is a catalytic residue.

It belongs to the IUNH family. RihA subfamily.

Functionally, hydrolyzes cytidine or uridine to ribose and cytosine or uracil, respectively. This is Pyrimidine-specific ribonucleoside hydrolase RihA from Shewanella sp. (strain MR-7).